The sequence spans 522 residues: GMP synthase [glutamine-hydrolyzing] (522 aa).

The region spanning 9-204 is the Glutamine amidotransferase type-1 domain; sequence KILILDFGAQ…VVDICGCQML (196 aa). Cysteine 86 serves as the catalytic Nucleophile. Catalysis depends on residues histidine 178 and glutamate 180. Residues 205 to 397 enclose the GMPS ATP-PPase domain; it reads WTAANIIEDQ…LGLPHAMVYR (193 aa). Residue 232-238 coordinates ATP; sequence SGGVDSS.

As to quaternary structure, homodimer.

The enzyme catalyses XMP + L-glutamine + ATP + H2O = GMP + L-glutamate + AMP + diphosphate + 2 H(+). Its pathway is purine metabolism; GMP biosynthesis; GMP from XMP (L-Gln route): step 1/1. In terms of biological role, catalyzes the synthesis of GMP from XMP. This is GMP synthase [glutamine-hydrolyzing] (guaA) from Xylella fastidiosa (strain 9a5c).